The sequence spans 160 residues: Cyclic pyranopterin monophosphate synthase (160 aa).

Residues 74-76 (LSH) and 112-113 (ME) each bind substrate. D127 is a catalytic residue.

The protein belongs to the MoaC family. As to quaternary structure, homohexamer; trimer of dimers.

The catalysed reaction is (8S)-3',8-cyclo-7,8-dihydroguanosine 5'-triphosphate = cyclic pyranopterin phosphate + diphosphate. It functions in the pathway cofactor biosynthesis; molybdopterin biosynthesis. Its function is as follows. Catalyzes the conversion of (8S)-3',8-cyclo-7,8-dihydroguanosine 5'-triphosphate to cyclic pyranopterin monophosphate (cPMP). This chain is Cyclic pyranopterin monophosphate synthase, found in Geobacter metallireducens (strain ATCC 53774 / DSM 7210 / GS-15).